Here is a 98-residue protein sequence, read N- to C-terminus: NADH-ubiquinone oxidoreductase chain 4L (98 aa).

3 helical membrane-spanning segments follow: residues 2–22 (TLVM…TLMF), 26–46 (LMST…MAVI), and 61–81 (IIIL…LAMV).

It belongs to the complex I subunit 4L family. As to quaternary structure, core subunit of respiratory chain NADH dehydrogenase (Complex I) which is composed of 45 different subunits.

It localises to the mitochondrion inner membrane. The enzyme catalyses a ubiquinone + NADH + 5 H(+)(in) = a ubiquinol + NAD(+) + 4 H(+)(out). Core subunit of the mitochondrial membrane respiratory chain NADH dehydrogenase (Complex I) which catalyzes electron transfer from NADH through the respiratory chain, using ubiquinone as an electron acceptor. Part of the enzyme membrane arm which is embedded in the lipid bilayer and involved in proton translocation. This is NADH-ubiquinone oxidoreductase chain 4L (MT-ND4L) from Nyctomys sumichrasti (Sumichrast's vesper rat).